The sequence spans 975 residues: Glycine dehydrogenase (decarboxylating) (975 aa).

Lysine 702 is subject to N6-(pyridoxal phosphate)lysine.

It belongs to the GcvP family. As to quaternary structure, the glycine cleavage system is composed of four proteins: P, T, L and H. Pyridoxal 5'-phosphate is required as a cofactor.

It carries out the reaction N(6)-[(R)-lipoyl]-L-lysyl-[glycine-cleavage complex H protein] + glycine + H(+) = N(6)-[(R)-S(8)-aminomethyldihydrolipoyl]-L-lysyl-[glycine-cleavage complex H protein] + CO2. Functionally, the glycine cleavage system catalyzes the degradation of glycine. The P protein binds the alpha-amino group of glycine through its pyridoxal phosphate cofactor; CO(2) is released and the remaining methylamine moiety is then transferred to the lipoamide cofactor of the H protein. The chain is Glycine dehydrogenase (decarboxylating) from Xanthomonas campestris pv. campestris (strain 8004).